A 138-amino-acid chain; its full sequence is Small ribosomal subunit protein uS11c (138 aa).

Positions 1–24 (MAKPIPKVGSRRNGRSSARKSARR) are disordered. Over residues 9–24 (GSRRNGRSSARKSARR) the composition is skewed to basic residues.

Belongs to the universal ribosomal protein uS11 family. In terms of assembly, part of the 30S ribosomal subunit.

The protein resides in the plastid. It is found in the chloroplast. The polypeptide is Small ribosomal subunit protein uS11c (Gossypium hirsutum (Upland cotton)).